Reading from the N-terminus, the 859-residue chain is Valine--tRNA ligase (859 aa).

The 'HIGH' region motif lies at 46–56 (PTVSGQLHIGH). The short motif at 583-587 (KMSKS) is the 'KMSKS' region element. Residue K586 coordinates ATP.

The protein belongs to the class-I aminoacyl-tRNA synthetase family. ValS type 2 subfamily. Monomer.

The protein resides in the cytoplasm. It catalyses the reaction tRNA(Val) + L-valine + ATP = L-valyl-tRNA(Val) + AMP + diphosphate. In terms of biological role, catalyzes the attachment of valine to tRNA(Val). As ValRS can inadvertently accommodate and process structurally similar amino acids such as threonine, to avoid such errors, it has a 'posttransfer' editing activity that hydrolyzes mischarged Thr-tRNA(Val) in a tRNA-dependent manner. The protein is Valine--tRNA ligase of Rickettsia felis (strain ATCC VR-1525 / URRWXCal2) (Rickettsia azadi).